The chain runs to 297 residues: Small ribosomal subunit protein uS2 (297 aa).

The interval 266–297 is disordered; it reads GASWDAAEPSDWAATPAAAGQEWAASGATEQW. The segment covering 282 to 297 has biased composition (low complexity); the sequence is AAAGQEWAASGATEQW.

The protein belongs to the universal ribosomal protein uS2 family. Component of the small ribosomal subunit. Mature ribosomes consist of a small (40S) and a large (60S) subunit. The 40S subunit contains about 33 different proteins and 1 molecule of RNA (18S). The 60S subunit contains about 49 different proteins and 3 molecules of RNA (25S, 5.8S and 5S). Interacts with rps21.

The protein resides in the cytoplasm. In terms of biological role, required for the assembly and/or stability of the 40S ribosomal subunit. Required for the processing of the 20S rRNA-precursor to mature 18S rRNA in a late step of the maturation of 40S ribosomal subunits. In Sclerotinia sclerotiorum (strain ATCC 18683 / 1980 / Ss-1) (White mold), this protein is Small ribosomal subunit protein uS2 (rps0).